Reading from the N-terminus, the 376-residue chain is tRNA-specific 2-thiouridylase MnmA (376 aa).

Residues Ala-16–Ser-23 and Leu-42 each bind ATP. Residue Cys-111 is the Nucleophile of the active site. A disulfide bond links Cys-111 and Cys-210. Residue Gly-135 participates in ATP binding. Residues Lys-158–Gln-160 form an interaction with tRNA region. Residue Cys-210 is the Cysteine persulfide intermediate of the active site.

It belongs to the MnmA/TRMU family.

Its subcellular location is the cytoplasm. The enzyme catalyses S-sulfanyl-L-cysteinyl-[protein] + uridine(34) in tRNA + AH2 + ATP = 2-thiouridine(34) in tRNA + L-cysteinyl-[protein] + A + AMP + diphosphate + H(+). In terms of biological role, catalyzes the 2-thiolation of uridine at the wobble position (U34) of tRNA, leading to the formation of s(2)U34. This chain is tRNA-specific 2-thiouridylase MnmA, found in Streptomyces avermitilis (strain ATCC 31267 / DSM 46492 / JCM 5070 / NBRC 14893 / NCIMB 12804 / NRRL 8165 / MA-4680).